Consider the following 235-residue polypeptide: Purine nucleoside phosphorylase DeoD-type (235 aa).

H4 is an a purine D-ribonucleoside binding site. Residues G20, R24, R43, and 87–90 (RVGT) each bind phosphate. Residues 179–181 (EME) and 203–204 (SD) each bind a purine D-ribonucleoside. D204 serves as the catalytic Proton donor.

Belongs to the PNP/UDP phosphorylase family. In terms of assembly, homohexamer; trimer of homodimers.

It carries out the reaction a purine D-ribonucleoside + phosphate = a purine nucleobase + alpha-D-ribose 1-phosphate. The catalysed reaction is a purine 2'-deoxy-D-ribonucleoside + phosphate = a purine nucleobase + 2-deoxy-alpha-D-ribose 1-phosphate. In terms of biological role, catalyzes the reversible phosphorolytic breakdown of the N-glycosidic bond in the beta-(deoxy)ribonucleoside molecules, with the formation of the corresponding free purine bases and pentose-1-phosphate. In Exiguobacterium sibiricum (strain DSM 17290 / CCUG 55495 / CIP 109462 / JCM 13490 / 255-15), this protein is Purine nucleoside phosphorylase DeoD-type.